We begin with the raw amino-acid sequence, 148 residues long: MSIIDNRKAHFDYHIEERYEAGLVLEGWEVKALRAGRGQIKEGYVVVKNAEIFLIGTHISPLPEASTHIHPDPVRTRKLLLHREEIKKLIGKVEQRGYTLVPLNFHYKGGRVKCDIALAKGKKLHDKRETEKKRHWEREKARIMRAGT.

This sequence belongs to the SmpB family.

It is found in the cytoplasm. Required for rescue of stalled ribosomes mediated by trans-translation. Binds to transfer-messenger RNA (tmRNA), required for stable association of tmRNA with ribosomes. tmRNA and SmpB together mimic tRNA shape, replacing the anticodon stem-loop with SmpB. tmRNA is encoded by the ssrA gene; the 2 termini fold to resemble tRNA(Ala) and it encodes a 'tag peptide', a short internal open reading frame. During trans-translation Ala-aminoacylated tmRNA acts like a tRNA, entering the A-site of stalled ribosomes, displacing the stalled mRNA. The ribosome then switches to translate the ORF on the tmRNA; the nascent peptide is terminated with the 'tag peptide' encoded by the tmRNA and targeted for degradation. The ribosome is freed to recommence translation, which seems to be the essential function of trans-translation. In Burkholderia ambifaria (strain ATCC BAA-244 / DSM 16087 / CCUG 44356 / LMG 19182 / AMMD) (Burkholderia cepacia (strain AMMD)), this protein is SsrA-binding protein.